A 60-amino-acid polypeptide reads, in one-letter code: UPF0434 protein YcaR (60 aa).

The protein belongs to the UPF0434 family.

The chain is UPF0434 protein YcaR from Escherichia coli O81 (strain ED1a).